The primary structure comprises 104 residues: Large ribosomal subunit protein uL24 (104 aa).

Belongs to the universal ribosomal protein uL24 family. In terms of assembly, part of the 50S ribosomal subunit.

One of two assembly initiator proteins, it binds directly to the 5'-end of the 23S rRNA, where it nucleates assembly of the 50S subunit. Its function is as follows. One of the proteins that surrounds the polypeptide exit tunnel on the outside of the subunit. The chain is Large ribosomal subunit protein uL24 from Pseudomonas fluorescens (strain SBW25).